Consider the following 259-residue polypeptide: DNA repair protein RecO (259 aa).

This sequence belongs to the RecO family.

Its function is as follows. Involved in DNA repair and RecF pathway recombination. The polypeptide is DNA repair protein RecO (Rhizobium rhizogenes (strain K84 / ATCC BAA-868) (Agrobacterium radiobacter)).